The primary structure comprises 115 residues: Peptidyl-tRNA hydrolase (115 aa).

The protein belongs to the PTH2 family.

The protein resides in the cytoplasm. It catalyses the reaction an N-acyl-L-alpha-aminoacyl-tRNA + H2O = an N-acyl-L-amino acid + a tRNA + H(+). Its function is as follows. The natural substrate for this enzyme may be peptidyl-tRNAs which drop off the ribosome during protein synthesis. This is Peptidyl-tRNA hydrolase from Methanocaldococcus jannaschii (strain ATCC 43067 / DSM 2661 / JAL-1 / JCM 10045 / NBRC 100440) (Methanococcus jannaschii).